Reading from the N-terminus, the 96-residue chain is Aspartyl/glutamyl-tRNA(Asn/Gln) amidotransferase subunit C (96 aa).

The protein belongs to the GatC family. Heterotrimer of A, B and C subunits.

It carries out the reaction L-glutamyl-tRNA(Gln) + L-glutamine + ATP + H2O = L-glutaminyl-tRNA(Gln) + L-glutamate + ADP + phosphate + H(+). It catalyses the reaction L-aspartyl-tRNA(Asn) + L-glutamine + ATP + H2O = L-asparaginyl-tRNA(Asn) + L-glutamate + ADP + phosphate + 2 H(+). In terms of biological role, allows the formation of correctly charged Asn-tRNA(Asn) or Gln-tRNA(Gln) through the transamidation of misacylated Asp-tRNA(Asn) or Glu-tRNA(Gln) in organisms which lack either or both of asparaginyl-tRNA or glutaminyl-tRNA synthetases. The reaction takes place in the presence of glutamine and ATP through an activated phospho-Asp-tRNA(Asn) or phospho-Glu-tRNA(Gln). The protein is Aspartyl/glutamyl-tRNA(Asn/Gln) amidotransferase subunit C of Bacillus anthracis (strain A0248).